Reading from the N-terminus, the 150-residue chain is UPF0178 protein Sbal_1771 (150 aa).

Belongs to the UPF0178 family.

This chain is UPF0178 protein Sbal_1771, found in Shewanella baltica (strain OS155 / ATCC BAA-1091).